The chain runs to 479 residues: Glutamate--tRNA ligase 2 (479 aa).

A 'HIGH' region motif is present at residues 10–20 (PSPTGSLHIGG). The 'KMSKS' region motif lies at 243–247 (KLSKR). An ATP-binding site is contributed by Lys246.

It belongs to the class-I aminoacyl-tRNA synthetase family. Glutamate--tRNA ligase type 1 subfamily. Monomer.

It is found in the cytoplasm. It catalyses the reaction tRNA(Glu) + L-glutamate + ATP = L-glutamyl-tRNA(Glu) + AMP + diphosphate. In terms of biological role, catalyzes the attachment of glutamate to tRNA(Glu) in a two-step reaction: glutamate is first activated by ATP to form Glu-AMP and then transferred to the acceptor end of tRNA(Glu). This Thermoanaerobacter pseudethanolicus (strain ATCC 33223 / 39E) (Clostridium thermohydrosulfuricum) protein is Glutamate--tRNA ligase 2.